The sequence spans 367 residues: Popeye domain-containing protein 2 (367 aa).

Asparagine 4 carries an N-linked (GlcNAc...) asparagine glycan. 2 helical membrane-spanning segments follow: residues 36–56 (FLLM…LFGI) and 77–97 (IVLW…QLVY). Disordered stretches follow at residues 273 to 292 (PSAS…ALEA) and 312 to 367 (APPA…TPEL). The segment covering 278 to 290 (GEPESEKDDEEAL) has biased composition (acidic residues). The span at 344–356 (PLQNSSQVMSRSQ) shows a compositional bias: polar residues. Residue asparagine 347 is glycosylated (N-linked (GlcNAc...) asparagine). The residue at position 364 (threonine 364) is a Phosphothreonine.

It belongs to the popeye family. As to expression, expressed in the developing and adult heart, with high expression levels in the sinus and atrioventricular nodes. Also expressed in the bladder and skeletal muscle.

The protein resides in the membrane. It localises to the cell membrane. Its subcellular location is the sarcolemma. Functionally, important for the maintenance of cardiac function. Plays a regulatory function in heart rate dynamics mediated, at least in part, through cAMP-binding and, probably, by increasing cell surface expression of the potassium channel KCNK2 and enhancing current density. This Mus musculus (Mouse) protein is Popeye domain-containing protein 2 (Popdc2).